The chain runs to 117 residues: Ribosome-binding factor A (117 aa).

It belongs to the RbfA family. As to quaternary structure, monomer. Binds 30S ribosomal subunits, but not 50S ribosomal subunits or 70S ribosomes.

The protein localises to the cytoplasm. Functionally, one of several proteins that assist in the late maturation steps of the functional core of the 30S ribosomal subunit. Associates with free 30S ribosomal subunits (but not with 30S subunits that are part of 70S ribosomes or polysomes). Required for efficient processing of 16S rRNA. May interact with the 5'-terminal helix region of 16S rRNA. This Petrotoga mobilis (strain DSM 10674 / SJ95) protein is Ribosome-binding factor A.